The sequence spans 371 residues: MTSIEPTHLGKKVIVGMSGGVDSSVSAYLLMKQGYQVEGLFMKNWEEDDTDEYCAAADDLKDAQAVCDKLGIKLHTVNFASEYWDNVFEYFLAEYKAGRTPNPDIMCNKEIKFKAFLEFADEILDADYIAMGHYVRRRDIDGTSQMLRGVDGNKDQSYFLYTLGYEQVARSLFPVGELDKSEVREIAKEMGLITHDKKDSTGICFIGERKFTDFLQTFLPAQPGNIETSEGEVIGTHQGLMYHTLGQRKGLGIGGLKNSNDDPWYVVEKDLVRNVLIVGQGGNHPRLMSNGLVANQLHWVDRKGPANGSKITVKTRYRQQDVPCSVTYDSDDVLRVIFDEPVAAVTPGQSAVFYDGEICLGGGIIDALIRD.

Residues 16–23 (GMSGGVDS) and methionine 42 contribute to the ATP site. The interval 102–104 (NPD) is interaction with target base in tRNA. Cysteine 107 acts as the Nucleophile in catalysis. A disulfide bridge links cysteine 107 with cysteine 204. Glycine 132 contacts ATP. The segment at 154 to 156 (KDQ) is interaction with tRNA. Cysteine 204 acts as the Cysteine persulfide intermediate in catalysis. The segment at 316-317 (RY) is interaction with tRNA.

The protein belongs to the MnmA/TRMU family.

It is found in the cytoplasm. It catalyses the reaction S-sulfanyl-L-cysteinyl-[protein] + uridine(34) in tRNA + AH2 + ATP = 2-thiouridine(34) in tRNA + L-cysteinyl-[protein] + A + AMP + diphosphate + H(+). Its function is as follows. Catalyzes the 2-thiolation of uridine at the wobble position (U34) of tRNA, leading to the formation of s(2)U34. The protein is tRNA-specific 2-thiouridylase MnmA of Shewanella pealeana (strain ATCC 700345 / ANG-SQ1).